Here is a 209-residue protein sequence, read N- to C-terminus: Uracil phosphoribosyltransferase (209 aa).

Residues arginine 79, arginine 104, and 131–139 (DPMLATGGS) each bind 5-phospho-alpha-D-ribose 1-diphosphate. Uracil contacts are provided by residues isoleucine 194 and 199-201 (GDA). Aspartate 200 lines the 5-phospho-alpha-D-ribose 1-diphosphate pocket.

This sequence belongs to the UPRTase family. Requires Mg(2+) as cofactor.

The catalysed reaction is UMP + diphosphate = 5-phospho-alpha-D-ribose 1-diphosphate + uracil. The protein operates within pyrimidine metabolism; UMP biosynthesis via salvage pathway; UMP from uracil: step 1/1. Its activity is regulated as follows. Allosterically activated by GTP. In terms of biological role, catalyzes the conversion of uracil and 5-phospho-alpha-D-ribose 1-diphosphate (PRPP) to UMP and diphosphate. The protein is Uracil phosphoribosyltransferase of Agathobacter rectalis (strain ATCC 33656 / DSM 3377 / JCM 17463 / KCTC 5835 / VPI 0990) (Eubacterium rectale).